We begin with the raw amino-acid sequence, 459 residues long: UDP-N-acetylmuramate--L-alanine ligase (459 aa).

Residue 118-124 coordinates ATP; the sequence is GTHGKTT.

This sequence belongs to the MurCDEF family.

Its subcellular location is the cytoplasm. It catalyses the reaction UDP-N-acetyl-alpha-D-muramate + L-alanine + ATP = UDP-N-acetyl-alpha-D-muramoyl-L-alanine + ADP + phosphate + H(+). The protein operates within cell wall biogenesis; peptidoglycan biosynthesis. Functionally, cell wall formation. This Clostridium beijerinckii (strain ATCC 51743 / NCIMB 8052) (Clostridium acetobutylicum) protein is UDP-N-acetylmuramate--L-alanine ligase.